The following is a 65-amino-acid chain: UPF0434 protein HS_0657 (65 aa).

This sequence belongs to the UPF0434 family.

The chain is UPF0434 protein HS_0657 from Histophilus somni (strain 129Pt) (Haemophilus somnus).